We begin with the raw amino-acid sequence, 64 residues long: MPKMKTKSGAAKRFKKTAGGLKHKHAFKSHILTKMTTKRKRQLRGTSMLNKSDVARVERSLRLR.

Basic residues predominate over residues 1-28; that stretch reads MPKMKTKSGAAKRFKKTAGGLKHKHAFK. A disordered region spans residues 1-64; the sequence is MPKMKTKSGA…ARVERSLRLR (64 aa). Over residues 53–64 the composition is skewed to basic and acidic residues; that stretch reads DVARVERSLRLR.

Belongs to the bacterial ribosomal protein bL35 family.

In Pseudomonas aeruginosa (strain LESB58), this protein is Large ribosomal subunit protein bL35.